Here is a 671-residue protein sequence, read N- to C-terminus: UvrABC system protein B (671 aa).

The region spanning 31–189 (KGFEEGKKEQ…QLVDIQFDRN (159 aa)) is the Helicase ATP-binding domain. 44–51 (GATGTGKT) contacts ATP. The short motif at 97–120 (YYDYYQPEAYVPSTDTYIEKDSAI) is the Beta-hairpin element. A Helicase C-terminal domain is found at 437 to 599 (QIDDLVGEIN…ITPKTIIKPI (163 aa)). Residues 634-669 (KELVANLRSQMQAAAKKLDFEQAASLRDTILELQAD) form the UVR domain.

It belongs to the UvrB family. In terms of assembly, forms a heterotetramer with UvrA during the search for lesions. Interacts with UvrC in an incision complex.

It is found in the cytoplasm. The UvrABC repair system catalyzes the recognition and processing of DNA lesions. A damage recognition complex composed of 2 UvrA and 2 UvrB subunits scans DNA for abnormalities. Upon binding of the UvrA(2)B(2) complex to a putative damaged site, the DNA wraps around one UvrB monomer. DNA wrap is dependent on ATP binding by UvrB and probably causes local melting of the DNA helix, facilitating insertion of UvrB beta-hairpin between the DNA strands. Then UvrB probes one DNA strand for the presence of a lesion. If a lesion is found the UvrA subunits dissociate and the UvrB-DNA preincision complex is formed. This complex is subsequently bound by UvrC and the second UvrB is released. If no lesion is found, the DNA wraps around the other UvrB subunit that will check the other stand for damage. This is UvrABC system protein B from Lacticaseibacillus casei (strain BL23) (Lactobacillus casei).